The following is a 142-amino-acid chain: Large ribosomal subunit protein uL16 (142 aa).

It belongs to the universal ribosomal protein uL16 family. In terms of assembly, part of the 50S ribosomal subunit.

In terms of biological role, binds 23S rRNA and is also seen to make contacts with the A and possibly P site tRNAs. This is Large ribosomal subunit protein uL16 from Trichormus variabilis (strain ATCC 29413 / PCC 7937) (Anabaena variabilis).